A 476-amino-acid polypeptide reads, in one-letter code: 4-(hydroxymethyl)benzenesulfonate dehydrogenase TsaD1 (476 aa).

NAD(+) is bound by residues 154-155 (WN), 178-181 (KAAE), and 230-231 (GS). Catalysis depends on glutamate 252, which acts as the Proton acceptor. NAD(+) is bound at residue leucine 253. The active-site Nucleophile is cysteine 286. Residue glutamate 380 coordinates NAD(+).

Belongs to the aldehyde dehydrogenase family. As to quaternary structure, homodimer.

It catalyses the reaction 4-(hydroxymethyl)benzenesulfonate + NAD(+) = 4-formylbenzenesulfonate + NADH + H(+). In terms of biological role, involved in the toluene-4-sulfonate degradation pathway. Does not discriminate between the sulfonate and the carboxyl substituents and can also be involved in the p-toluenecarboxylate degradation pathway. This Comamonas testosteroni (Pseudomonas testosteroni) protein is 4-(hydroxymethyl)benzenesulfonate dehydrogenase TsaD1 (tsaD1).